The sequence spans 531 residues: MKNSVKSEIYRVLGRDFILEKPKDKNLAHYATPFAFSLAKEFKKSPAIIASQLALKFENHELFDVFSINGYLNFKLKGEFLNSLANNALSLAESFGSKKPQSQKDIFIEYISANPTGPLHIGHVRGAVYGDTLARVARYIGLDVFTEYYINDAGNQIDLLGISISLFAREALFNENVQYPDKYYRGEYIEDIAKLALGKFGKDIFYDESRNLELAEFGKDEVLKIIKKDLQDVGIFIESWASEKSLYDELEGTIKKLASSGQMYEKDQTTYIASTMLGDDSDRVVIRSDGRPTYLAGDIVYHDAKFKKGYKHYINIWGADHHGYIARIKAAINFLGYDESRLEVILMQMVSLLKEGKPFKMSKRAGTSVLMSDILSEIGSDALRFIFISKANTSSLEFDIDELKKEDSSNPIFYINYAHARVNQVFAKASKLPNDVVGADLSNLDESGKNLLFEALILPEVLEDAVTSRSLHKIPEYLKSLSASFHKFYNENRVVGSKNEDELLKLFSVVALSIKVALNLIGIKAKDKMEH.

The 'HIGH' region signature appears at 113-123 (ANPTGPLHIGH).

Belongs to the class-I aminoacyl-tRNA synthetase family. In terms of assembly, monomer.

It is found in the cytoplasm. The catalysed reaction is tRNA(Arg) + L-arginine + ATP = L-arginyl-tRNA(Arg) + AMP + diphosphate. The protein is Arginine--tRNA ligase of Campylobacter fetus subsp. fetus (strain 82-40).